Consider the following 204-residue polypeptide: Dephospho-CoA kinase (204 aa).

Positions 3–204 (VIGLTGGIGS…DRLDLAYRAH (202 aa)) constitute a DPCK domain. ATP is bound at residue 11 to 16 (GSGKSY).

The protein belongs to the CoaE family.

The protein resides in the cytoplasm. The catalysed reaction is 3'-dephospho-CoA + ATP = ADP + CoA + H(+). Its pathway is cofactor biosynthesis; coenzyme A biosynthesis; CoA from (R)-pantothenate: step 5/5. In terms of biological role, catalyzes the phosphorylation of the 3'-hydroxyl group of dephosphocoenzyme A to form coenzyme A. The protein is Dephospho-CoA kinase of Ralstonia nicotianae (strain ATCC BAA-1114 / GMI1000) (Ralstonia solanacearum).